We begin with the raw amino-acid sequence, 155 residues long: Small ribosomal subunit protein uS10m (155 aa).

Belongs to the universal ribosomal protein uS10 family. Component of the mitochondrial ribosome small subunit (28S) which comprises a 12S rRNA and about 30 distinct proteins.

It localises to the mitochondrion. This Rattus norvegicus (Rat) protein is Small ribosomal subunit protein uS10m (Mrps10).